Consider the following 575-residue polypeptide: Glutathione hydrolase proenzyme (575 aa).

A signal peptide spans 1–24 (MKNQTFSKALLATALSCALFNVHA). Arginine 100 contributes to the L-glutamate binding site. Threonine 376 (nucleophile) is an active-site residue. L-glutamate-binding positions include threonine 394, asparagine 396, glutamate 415, aspartate 418, 447–448 (SS), and 468–469 (GG).

The protein belongs to the gamma-glutamyltransferase family. This enzyme consists of two polypeptide chains, which are synthesized in precursor form from a single polypeptide. Post-translationally, cleaved by autocatalysis into a large and a small subunit.

The protein localises to the periplasm. The enzyme catalyses an N-terminal (5-L-glutamyl)-[peptide] + an alpha-amino acid = 5-L-glutamyl amino acid + an N-terminal L-alpha-aminoacyl-[peptide]. It catalyses the reaction glutathione + H2O = L-cysteinylglycine + L-glutamate. It carries out the reaction an S-substituted glutathione + H2O = an S-substituted L-cysteinylglycine + L-glutamate. It functions in the pathway sulfur metabolism; glutathione metabolism. The chain is Glutathione hydrolase proenzyme (ggt) from Pseudomonas sp. (strain A14).